We begin with the raw amino-acid sequence, 387 residues long: TPR repeat-containing protein SYNPCC7002_A0425 (387 aa).

9 TPR repeats span residues 63-96 (LNAL…EANN), 97-130 (ARIH…EDDN), 132-164 (EFFN…QPNN), 166-198 (AYSL…DSNN), 200-232 (MALQ…RPND), 233-266 (AELR…STRD), 267-300 (SAMQ…DPQS), 302-334 (EAFA…SPTD), and 336-368 (AAFY…YQQR).

This Picosynechococcus sp. (strain ATCC 27264 / PCC 7002 / PR-6) (Agmenellum quadruplicatum) protein is TPR repeat-containing protein SYNPCC7002_A0425.